Reading from the N-terminus, the 486-residue chain is CREB-regulated transcription coactivator 1 homolog (486 aa).

The segment at 1–62 is disordered; the sequence is MSNSNTPRKF…APMPIPQQGL (62 aa). The span at 9 to 23 shows a compositional bias: basic and acidic residues; sequence KFSEKIAILERKQNE. Residues 34-52 are compositionally biased toward polar residues; the sequence is QVQSITHHPTDSSGSSTAT. The residue at position 76 (S76) is a Phosphoserine; by AMPK. Residues 103–166 are disordered; sequence PIQGHRSRSP…PPYNQPGQLV (64 aa). Residues 144-160 show a composition bias toward pro residues; that stretch reads RTPPQHPQYTPYGPPYN. S179 is modified (phosphoserine; by AMPK). 3 disordered regions span residues 214–278, 327–417, and 460–486; these read SMPG…QSPN, FNQD…SNSP, and APPQTISNHQTPNNSFHDPGGTQMLQN. 3 stretches are compositionally biased toward polar residues: residues 224–245, 387–402, and 461–475; these read PNSQSQQHSPQLTPQGSQQGSP, PESQSAPTSPHNQLDP, and PPQTISNHQTPNNSF.

The protein belongs to the TORC family. Interacts with crh-1. Phosphorylated by AMPK at Ser-76 and Ser-179. Dephosphorylated by tax-6, the catalytic subunit of calcineurin. In terms of tissue distribution, expressed throughout the intestine and in head and tail neurons. Expressed in octopaminergic RIC neurons.

Its subcellular location is the nucleus. The protein localises to the cytoplasm. It is found in the cytosol. In terms of biological role, transcriptional coactivator for crh-1, the homolog of vertebrate transcription factor CREB1. Regulates the transcription of metabolic genes and may have a role in mitochondrial dynamics and metabolism. Involved in modulation of lifespan. Through crh-1, counteracts the pro-lifespan-extension signals of AMPK both cell autonomously and, when expressed in neurons, at a systemic level, possibly using the catecholamine analog, octopamine, as a messenger. The polypeptide is CREB-regulated transcription coactivator 1 homolog (Caenorhabditis elegans).